A 179-amino-acid chain; its full sequence is MADLITVARPYAEALMGWRKRAARNRPGRMHCRRLPAMIADVQAQAFLTDPERRDAEKVSLLSAVPVAVDVKAWKAFLALLIHNDRWPATAEIGTLFADAMRRAEGVVDVLVTSAIALDAGQKTAVQSALERRFAGHKVRFREAVDAALIGGLVIHTGDLTIDASVRGQVQQLARTLRS.

It belongs to the ATPase delta chain family. In terms of assembly, F-type ATPases have 2 components, F(1) - the catalytic core - and F(0) - the membrane proton channel. F(1) has five subunits: alpha(3), beta(3), gamma(1), delta(1), epsilon(1). F(0) has three main subunits: a(1), b(2) and c(10-14). The alpha and beta chains form an alternating ring which encloses part of the gamma chain. F(1) is attached to F(0) by a central stalk formed by the gamma and epsilon chains, while a peripheral stalk is formed by the delta and b chains.

The protein resides in the cell inner membrane. In terms of biological role, f(1)F(0) ATP synthase produces ATP from ADP in the presence of a proton or sodium gradient. F-type ATPases consist of two structural domains, F(1) containing the extramembraneous catalytic core and F(0) containing the membrane proton channel, linked together by a central stalk and a peripheral stalk. During catalysis, ATP synthesis in the catalytic domain of F(1) is coupled via a rotary mechanism of the central stalk subunits to proton translocation. Functionally, this protein is part of the stalk that links CF(0) to CF(1). It either transmits conformational changes from CF(0) to CF(1) or is implicated in proton conduction. The chain is ATP synthase subunit delta from Acidithiobacillus ferridurans.